Reading from the N-terminus, the 470-residue chain is ATP synthase subunit beta (470 aa).

Glycine 148 to threonine 155 is an ATP binding site.

The protein belongs to the ATPase alpha/beta chains family. As to quaternary structure, F-type ATPases have 2 components, CF(1) - the catalytic core - and CF(0) - the membrane proton channel. CF(1) has five subunits: alpha(3), beta(3), gamma(1), delta(1), epsilon(1). CF(0) has three main subunits: a(1), b(2) and c(9-12). The alpha and beta chains form an alternating ring which encloses part of the gamma chain. CF(1) is attached to CF(0) by a central stalk formed by the gamma and epsilon chains, while a peripheral stalk is formed by the delta and b chains.

It is found in the cell inner membrane. It catalyses the reaction ATP + H2O + 4 H(+)(in) = ADP + phosphate + 5 H(+)(out). Produces ATP from ADP in the presence of a proton gradient across the membrane. The catalytic sites are hosted primarily by the beta subunits. This chain is ATP synthase subunit beta, found in Saccharophagus degradans (strain 2-40 / ATCC 43961 / DSM 17024).